The chain runs to 288 residues: UDP-3-O-acyl-N-acetylglucosamine deacetylase (288 aa).

Positions 79, 236, and 240 each coordinate Zn(2+). Residue H263 is the Proton donor of the active site.

Belongs to the LpxC family. It depends on Zn(2+) as a cofactor.

The catalysed reaction is a UDP-3-O-[(3R)-3-hydroxyacyl]-N-acetyl-alpha-D-glucosamine + H2O = a UDP-3-O-[(3R)-3-hydroxyacyl]-alpha-D-glucosamine + acetate. Its pathway is glycolipid biosynthesis; lipid IV(A) biosynthesis; lipid IV(A) from (3R)-3-hydroxytetradecanoyl-[acyl-carrier-protein] and UDP-N-acetyl-alpha-D-glucosamine: step 2/6. Functionally, catalyzes the hydrolysis of UDP-3-O-myristoyl-N-acetylglucosamine to form UDP-3-O-myristoylglucosamine and acetate, the committed step in lipid A biosynthesis. In Rickettsia prowazekii (strain Madrid E), this protein is UDP-3-O-acyl-N-acetylglucosamine deacetylase.